The primary structure comprises 89 residues: Small ribosomal subunit protein uS15 (89 aa).

The protein belongs to the universal ribosomal protein uS15 family. Part of the 30S ribosomal subunit. Forms a bridge to the 50S subunit in the 70S ribosome, contacting the 23S rRNA.

Functionally, one of the primary rRNA binding proteins, it binds directly to 16S rRNA where it helps nucleate assembly of the platform of the 30S subunit by binding and bridging several RNA helices of the 16S rRNA. Its function is as follows. Forms an intersubunit bridge (bridge B4) with the 23S rRNA of the 50S subunit in the ribosome. This is Small ribosomal subunit protein uS15 from Levilactobacillus brevis (strain ATCC 367 / BCRC 12310 / CIP 105137 / JCM 1170 / LMG 11437 / NCIMB 947 / NCTC 947) (Lactobacillus brevis).